The following is a 183-amino-acid chain: Gamma-crystallin N (183 aa).

4 Beta/gamma crystallin 'Greek key' domains span residues 6 to 46 (GKIT…RVES), 47 to 89 (GAWV…RPVG), 95 to 136 (FRID…KVYG), and 138 to 180 (GAWV…RRVL).

Belongs to the beta/gamma-crystallin family. As to quaternary structure, monomer. As to expression, primordially eye-specific. Present in lens nucleus. In the retina, expression in observed in the outer plexiform layer (containing photoreceptors axons and synapses) and photoreceptor outer segments (at protein level). Also detected in the auditory hindbrain where it is highly expressed in the medial nucleus of the trapezoid body, but also present in other nuclei of the superior olivary complex.

Functionally, crystallins are the dominant structural components of the vertebrate eye lens. Also plays an important role for integrity and function of auditory nuclei. The polypeptide is Gamma-crystallin N (Mus musculus (Mouse)).